Here is a 488-residue protein sequence, read N- to C-terminus: Ribulose bisphosphate carboxylase large chain (488 aa).

Substrate contacts are provided by N127 and T177. The active-site Proton acceptor is K179. K181 contacts substrate. 3 residues coordinate Mg(2+): K205, D207, and E208. K205 carries the N6-carboxylysine modification. The active-site Proton acceptor is the H297. Residues R298, H330, and S382 each coordinate substrate.

Belongs to the RuBisCO large chain family. Type I subfamily. Heterohexadecamer of 8 large chains and 8 small chains. Mg(2+) serves as cofactor.

The protein resides in the plastid. The protein localises to the chloroplast. It carries out the reaction 2 (2R)-3-phosphoglycerate + 2 H(+) = D-ribulose 1,5-bisphosphate + CO2 + H2O. It catalyses the reaction D-ribulose 1,5-bisphosphate + O2 = 2-phosphoglycolate + (2R)-3-phosphoglycerate + 2 H(+). In terms of biological role, ruBisCO catalyzes two reactions: the carboxylation of D-ribulose 1,5-bisphosphate, the primary event in carbon dioxide fixation, as well as the oxidative fragmentation of the pentose substrate in the photorespiration process. Both reactions occur simultaneously and in competition at the same active site. This Chrysotila carterae (Marine alga) protein is Ribulose bisphosphate carboxylase large chain.